Consider the following 335-residue polypeptide: N-acetyl-gamma-glutamyl-phosphate reductase (335 aa).

C147 is a catalytic residue.

It belongs to the NAGSA dehydrogenase family. Type 1 subfamily.

Its subcellular location is the cytoplasm. It catalyses the reaction N-acetyl-L-glutamate 5-semialdehyde + phosphate + NADP(+) = N-acetyl-L-glutamyl 5-phosphate + NADPH + H(+). It participates in amino-acid biosynthesis; L-arginine biosynthesis; N(2)-acetyl-L-ornithine from L-glutamate: step 3/4. Functionally, catalyzes the NADPH-dependent reduction of N-acetyl-5-glutamyl phosphate to yield N-acetyl-L-glutamate 5-semialdehyde. This chain is N-acetyl-gamma-glutamyl-phosphate reductase, found in Campylobacter hominis (strain ATCC BAA-381 / DSM 21671 / CCUG 45161 / LMG 19568 / NCTC 13146 / CH001A).